The chain runs to 274 residues: 5'-nucleotidase SurE (274 aa).

Positions 12, 13, 45, and 103 each coordinate a divalent metal cation.

It belongs to the SurE nucleotidase family. Requires a divalent metal cation as cofactor.

It localises to the cytoplasm. It catalyses the reaction a ribonucleoside 5'-phosphate + H2O = a ribonucleoside + phosphate. Its function is as follows. Nucleotidase that shows phosphatase activity on nucleoside 5'-monophosphates. The sequence is that of 5'-nucleotidase SurE from Chlamydia felis (strain Fe/C-56) (Chlamydophila felis).